Reading from the N-terminus, the 61-residue chain is MAVPKRKTSPSKRGMRRSADGLKSATYVEDKNSGELRRPHHIDLKTGMYRGRQVLTPKESA.

Over residues 1 to 16 (MAVPKRKTSPSKRGMR) the composition is skewed to basic residues. Residues 1 to 35 (MAVPKRKTSPSKRGMRRSADGLKSATYVEDKNSGE) form a disordered region.

It belongs to the bacterial ribosomal protein bL32 family.

In Agrobacterium fabrum (strain C58 / ATCC 33970) (Agrobacterium tumefaciens (strain C58)), this protein is Large ribosomal subunit protein bL32.